We begin with the raw amino-acid sequence, 84 residues long: UPF0297 protein Csac_1773 (84 aa).

This sequence belongs to the UPF0297 family.

This Caldicellulosiruptor saccharolyticus (strain ATCC 43494 / DSM 8903 / Tp8T 6331) protein is UPF0297 protein Csac_1773.